The sequence spans 139 residues: D-ribose pyranase (139 aa).

Residue His-20 is the Proton donor of the active site. Residues Asp-28, His-106, and 128–130 (YAN) each bind substrate.

This sequence belongs to the RbsD / FucU family. RbsD subfamily. In terms of assembly, homodecamer.

The protein resides in the cytoplasm. It catalyses the reaction beta-D-ribopyranose = beta-D-ribofuranose. The protein operates within carbohydrate metabolism; D-ribose degradation; D-ribose 5-phosphate from beta-D-ribopyranose: step 1/2. Catalyzes the interconversion of beta-pyran and beta-furan forms of D-ribose. In Haemophilus influenzae (strain 86-028NP), this protein is D-ribose pyranase.